The chain runs to 105 residues: UPF0145 protein jk0060 (105 aa).

The protein belongs to the UPF0145 family.

The polypeptide is UPF0145 protein jk0060 (Corynebacterium jeikeium (strain K411)).